Reading from the N-terminus, the 65-residue chain is Large ribosomal subunit protein bL35 (65 aa).

This sequence belongs to the bacterial ribosomal protein bL35 family.

This is Large ribosomal subunit protein bL35 from Syntrophobacter fumaroxidans (strain DSM 10017 / MPOB).